A 133-amino-acid chain; its full sequence is Fatty acid-binding protein (133 aa).

The protein belongs to the calycin superfamily. Fatty-acid binding protein (FABP) family.

In Clonorchis sinensis (Chinese liver fluke), this protein is Fatty acid-binding protein.